We begin with the raw amino-acid sequence, 268 residues long: Undecaprenyl-diphosphatase 1 (268 aa).

The next 7 membrane-spanning stretches (helical) occupy residues 5 to 25 (TIVE…IPVS), 43 to 63 (GKAF…SVYF), 81 to 101 (HFVI…ALAH), 107 to 127 (VLFE…VILL), 185 to 205 (AEFS…FDLF), 214 to 234 (ADLP…LFVV), and 248 to 268 (LFGW…MIWG).

This sequence belongs to the UppP family.

It is found in the cell inner membrane. The catalysed reaction is di-trans,octa-cis-undecaprenyl diphosphate + H2O = di-trans,octa-cis-undecaprenyl phosphate + phosphate + H(+). In terms of biological role, catalyzes the dephosphorylation of undecaprenyl diphosphate (UPP). Confers resistance to bacitracin. This is Undecaprenyl-diphosphatase 1 from Mesorhizobium japonicum (strain LMG 29417 / CECT 9101 / MAFF 303099) (Mesorhizobium loti (strain MAFF 303099)).